Reading from the N-terminus, the 101-residue chain is Urease subunit gamma (101 aa).

Belongs to the urease gamma subunit family. In terms of assembly, heterotrimer of UreA (gamma), UreB (beta) and UreC (alpha) subunits. Three heterotrimers associate to form the active enzyme.

The protein localises to the cytoplasm. The catalysed reaction is urea + 2 H2O + H(+) = hydrogencarbonate + 2 NH4(+). It functions in the pathway nitrogen metabolism; urea degradation; CO(2) and NH(3) from urea (urease route): step 1/1. This chain is Urease subunit gamma, found in Ureaplasma parvum serovar 3 (strain ATCC 27815 / 27 / NCTC 11736).